We begin with the raw amino-acid sequence, 292 residues long: 5,10-methylenetetrahydrofolate reductase (292 aa).

Glu-26 acts as the Proton donor/acceptor in catalysis. Thr-57 lines the NADH pocket. The FAD site is built by Tyr-58, Ala-60, His-86, Arg-116, Gly-117, Asp-118, Ala-130, Tyr-150, His-154, Ala-157, Asp-163, Asn-166, Arg-169, and Lys-170. Residue Asp-118 coordinates (6S)-5-methyl-5,6,7,8-tetrahydrofolate. Gln-181 lines the NADH pocket. Gln-181, Gln-217, and Arg-277 together coordinate (6S)-5-methyl-5,6,7,8-tetrahydrofolate.

Belongs to the methylenetetrahydrofolate reductase family. It depends on FAD as a cofactor.

The enzyme catalyses (6S)-5-methyl-5,6,7,8-tetrahydrofolate + NAD(+) = (6R)-5,10-methylene-5,6,7,8-tetrahydrofolate + NADH + H(+). Its pathway is one-carbon metabolism; tetrahydrofolate interconversion. It participates in amino-acid biosynthesis; L-methionine biosynthesis via de novo pathway. Its function is as follows. Catalyzes the NADH-dependent reduction of 5,10-methylenetetrahydrofolate to 5-methyltetrahydrofolate. Is required to provide the methyl group necessary for methionine synthetase to convert homocysteine to methionine; the methyl group is given by 5-methyltetrahydrofolate. This chain is 5,10-methylenetetrahydrofolate reductase (metF), found in Neisseria meningitidis serogroup B (strain ATCC BAA-335 / MC58).